The chain runs to 233 residues: PEP2-like protein NECHADRAFT_97050 (233 aa).

The protein belongs to the PEP2 family.

In terms of biological role, may contribute to the ability of the fungus to cause disease on pea plants. The protein is PEP2-like protein NECHADRAFT_97050 of Fusarium vanettenii (strain ATCC MYA-4622 / CBS 123669 / FGSC 9596 / NRRL 45880 / 77-13-4) (Fusarium solani subsp. pisi).